The chain runs to 392 residues: Probable tRNA sulfurtransferase (392 aa).

The 108-residue stretch at 61–168 (DEALKLLSKV…EFTYIYSEII (108 aa)) folds into the THUMP domain. ATP is bound by residues 185–186 (LL), 210–211 (HF), R267, G289, and Q298.

Belongs to the ThiI family.

It is found in the cytoplasm. It carries out the reaction [ThiI sulfur-carrier protein]-S-sulfanyl-L-cysteine + a uridine in tRNA + 2 reduced [2Fe-2S]-[ferredoxin] + ATP + H(+) = [ThiI sulfur-carrier protein]-L-cysteine + a 4-thiouridine in tRNA + 2 oxidized [2Fe-2S]-[ferredoxin] + AMP + diphosphate. It catalyses the reaction [ThiS sulfur-carrier protein]-C-terminal Gly-Gly-AMP + S-sulfanyl-L-cysteinyl-[cysteine desulfurase] + AH2 = [ThiS sulfur-carrier protein]-C-terminal-Gly-aminoethanethioate + L-cysteinyl-[cysteine desulfurase] + A + AMP + 2 H(+). It functions in the pathway cofactor biosynthesis; thiamine diphosphate biosynthesis. Its function is as follows. Catalyzes the ATP-dependent transfer of a sulfur to tRNA to produce 4-thiouridine in position 8 of tRNAs, which functions as a near-UV photosensor. Also catalyzes the transfer of sulfur to the sulfur carrier protein ThiS, forming ThiS-thiocarboxylate. This is a step in the synthesis of thiazole, in the thiamine biosynthesis pathway. The sulfur is donated as persulfide by IscS. The chain is Probable tRNA sulfurtransferase from Acetivibrio thermocellus (strain ATCC 27405 / DSM 1237 / JCM 9322 / NBRC 103400 / NCIMB 10682 / NRRL B-4536 / VPI 7372) (Clostridium thermocellum).